We begin with the raw amino-acid sequence, 139 residues long: MRIMGLDVGSKTVGVAISDPLGFTAQGLEIIKIDEEKAEFGFTRLEELVKQYQVEQFVIGLPKNMNNTNGPRVDASITYGNHIEHLFGLPVHYQDERLTTVEAERMLIEQADISRGKRKKVIDKLAAQLILQNYLNRNF.

The protein belongs to the YqgF nuclease family.

The protein localises to the cytoplasm. Could be a nuclease involved in processing of the 5'-end of pre-16S rRNA. This is Putative pre-16S rRNA nuclease from Streptococcus pyogenes serotype M3 (strain ATCC BAA-595 / MGAS315).